The chain runs to 452 residues: BUB3-interacting and GLEBS motif-containing protein ZNF207 (452 aa).

The segment at M1–E92 is microtubule-binding region. C2H2-type zinc fingers lie at residues P11 to H34 and F35 to H58. 2 disordered regions span residues Q99 to Q131 and S298 to T330. The segment covering D113–T123 has biased composition (acidic residues). Residues A329–Q361 form a GLEBS region.

As to quaternary structure, interacts (via GLEBS region) with bub3.

Its subcellular location is the nucleus. It localises to the chromosome. The protein localises to the centromere. The protein resides in the kinetochore. It is found in the cytoplasm. Its subcellular location is the cytoskeleton. It localises to the spindle. Kinetochore- and microtubule-binding protein that plays a key role in spindle assembly. Znf207/BuGZ is mainly composed of disordered low-complexity regions and undergoes phase transition or coacervation to form temperature-dependent liquid droplets. Coacervation promotes microtubule bundling and concentrates tubulin, promoting microtubule polymerization and assembly of spindle and spindle matrix by concentrating its building blocks. This is BUB3-interacting and GLEBS motif-containing protein ZNF207 from Xenopus laevis (African clawed frog).